A 197-amino-acid chain; its full sequence is Imidazoleglycerol-phosphate dehydratase (197 aa).

It belongs to the imidazoleglycerol-phosphate dehydratase family.

It localises to the cytoplasm. The enzyme catalyses D-erythro-1-(imidazol-4-yl)glycerol 3-phosphate = 3-(imidazol-4-yl)-2-oxopropyl phosphate + H2O. It participates in amino-acid biosynthesis; L-histidine biosynthesis; L-histidine from 5-phospho-alpha-D-ribose 1-diphosphate: step 6/9. In Rhodopseudomonas palustris (strain HaA2), this protein is Imidazoleglycerol-phosphate dehydratase.